The following is a 239-amino-acid chain: DnaA regulatory inactivator Hda (239 aa).

This sequence belongs to the DnaA family. HdA subfamily. As to quaternary structure, the active form seems to be an ADP-bound monomer. Forms the RIDA complex (regulatory inactivation of DnaA) of ATP-DnaA, ADP-Hda and the DNA-loaded beta sliding clamp (dnaN).

Mediates the interaction of DNA replication initiator protein DnaA with DNA polymerase subunit beta sliding clamp (dnaN). Stimulates hydrolysis of ATP-DnaA to ADP-DnaA, rendering DnaA inactive for reinitiation, a process called regulatory inhibition of DnaA or RIDA. The sequence is that of DnaA regulatory inactivator Hda from Yersinia enterocolitica serotype O:8 / biotype 1B (strain NCTC 13174 / 8081).